Here is a 317-residue protein sequence, read N- to C-terminus: Beta-ketoacyl-[acyl-carrier-protein] synthase III (317 aa).

Residues cysteine 112 and histidine 244 contribute to the active site. Residues 245-249 (QANLR) are ACP-binding. Asparagine 274 is an active-site residue.

The protein belongs to the thiolase-like superfamily. FabH family. As to quaternary structure, homodimer.

It localises to the cytoplasm. It catalyses the reaction malonyl-[ACP] + acetyl-CoA + H(+) = 3-oxobutanoyl-[ACP] + CO2 + CoA. Its pathway is lipid metabolism; fatty acid biosynthesis. Functionally, catalyzes the condensation reaction of fatty acid synthesis by the addition to an acyl acceptor of two carbons from malonyl-ACP. Catalyzes the first condensation reaction which initiates fatty acid synthesis and may therefore play a role in governing the total rate of fatty acid production. Possesses both acetoacetyl-ACP synthase and acetyl transacylase activities. Its substrate specificity determines the biosynthesis of branched-chain and/or straight-chain of fatty acids. This Serratia proteamaculans (strain 568) protein is Beta-ketoacyl-[acyl-carrier-protein] synthase III.